An 809-amino-acid polypeptide reads, in one-letter code: MSFYARALTHRARPGYRIIPENTVTEDIELGAIGEETPLLSEGIITAAEETAAVGLPELGVGAVGAVGTHADVLYRNRNAFKSVLTGNYTDLKGNPLKQRNAISEKTKQLGKQIFQGDFNRAFPDNLKLETEQEKTDLLRYYNHNRRLAGLSEAYPQGKGYAYAKSQKVLEAEKRGLTVPGYKYLGPGNSLNRGPPTNEIDADAKEHDEAYSQSKTAQEVSKADNTFVNKALDHVVNAINLKESPSNTVGAIIGATGIGTKQAIEKHTGVIYPSVSGMSREINPKYLNSWSDWIKENKPNNFAGIQLPEDFYTEEQTLSDSPMSESTKRKADTPAEETPSKKGAHNTDSSSQSADPQNPSSSGATTDLDVTMAMSLPGTGSGTSSGGGNTTGQEIYEIPRPFTNFGKKLSTYTKSHKFMIFGLANNVIAETGTTGNLHRLLTTCLAEIPWQKIPLYMNQSEFDLLPPGSRIVECNVKVIFRSNRIAFETSSTATKQATLNQISNLQTAVGLNKLGWGIDRSFTAFQSDQPMIPTASAPPKYASVSGANGYRGMIADYYGADSNNDIAFGNAGNYPHHQVGSFTFLQNYYCMYIQTERGTGGWPCLAEHFQQYDSKTVNNQCLLDVSYKPQMGMIKPPLNYNIIGFPTNKGAISIGENLTAMRSANVSGPEIATQQVSETSNNRIHNFPATFFDIYADIEKSQRLNKGPWGFEHPQIQPSIHIGMQAVPALTTGALLVNSSPLNSWTDSMGYVDVIASCTVMESQPTHFPYATSANTNPGNTVYRNNINVNSLTSAFNGLYGNAATLGSL.

Polar residues-rich tracts occupy residues 315–325 (EQTLSDSPMSE) and 346–365 (NTDS…SGAT). Disordered stretches follow at residues 315–366 (EQTL…GATT) and 373–392 (AMSL…NTTG). The segment covering 379–390 (TGSGTSSGGGNT) has biased composition (gly residues).

It localises to the virion. Capsid protein self-assembles to form an icosahedral capsid with a T=1 symmetry, about 22 nm in diameter, and consisting of 60 copies of size variants of the capsid proteins, which differ in the N-terminushe capsid encapsulates the genomic ssDNA. Capsid proteins are responsible for the attachment to host cell receptors. This attachment induces virion internalization predominantly through clathrin-dependent endocytosis. The chain is Capsid protein VP1 (VP) from Diatraea saccharalis densovirus (DsDNV).